The primary structure comprises 180 residues: ATP-dependent protease subunit HslV (180 aa).

The active site involves Thr8. Residues Gly165, Asp168, and Thr171 each coordinate Na(+).

Belongs to the peptidase T1B family. HslV subfamily. In terms of assembly, a double ring-shaped homohexamer of HslV is capped on each side by a ring-shaped HslU homohexamer. The assembly of the HslU/HslV complex is dependent on binding of ATP.

The protein localises to the cytoplasm. The catalysed reaction is ATP-dependent cleavage of peptide bonds with broad specificity.. Allosterically activated by HslU binding. Its function is as follows. Protease subunit of a proteasome-like degradation complex believed to be a general protein degrading machinery. The chain is ATP-dependent protease subunit HslV from Lactiplantibacillus plantarum (strain ATCC BAA-793 / NCIMB 8826 / WCFS1) (Lactobacillus plantarum).